The sequence spans 186 residues: Large ribosomal subunit protein uL16 (186 aa).

Belongs to the universal ribosomal protein uL16 family.

The polypeptide is Large ribosomal subunit protein uL16 (Nanoarchaeum equitans (strain Kin4-M)).